A 101-amino-acid polypeptide reads, in one-letter code: MDKSKRLFLKSKRSFRRRLPPIQSGDRIDYRNMSLISRFISEQGKILSRRVNRLTLKQQRLITIAIKQARILCLLPFLNNEKQFERSESTPRTTGLRIKNK.

The protein belongs to the bacterial ribosomal protein bS18 family. Part of the 30S ribosomal subunit.

The protein localises to the plastid. The protein resides in the chloroplast. This Morus indica (Mulberry) protein is Small ribosomal subunit protein bS18c.